The sequence spans 222 residues: (4-{4-[2-(gamma-L-glutamylamino)ethyl]phenoxymethyl}furan-2-yl)methanamine synthase (222 aa).

This sequence belongs to the MfnF family.

It catalyses the reaction gamma-L-glutamyltyramine + [5-(aminomethyl)furan-3-yl]methyl diphosphate = (4-{4-[2-(gamma-L-glutamylamino)ethyl]phenoxymethyl}furan-2-yl)methanamine + diphosphate. The protein operates within cofactor biosynthesis; methanofuran biosynthesis. Functionally, catalyzes the condensation between 5-(aminomethyl)-3-furanmethanol diphosphate (F1-PP) and gamma-glutamyltyramine to produce APMF-Glu. This chain is (4-{4-[2-(gamma-L-glutamylamino)ethyl]phenoxymethyl}furan-2-yl)methanamine synthase, found in Methanococcus vannielii.